We begin with the raw amino-acid sequence, 83 residues long: Small ribosomal subunit protein bS18 (83 aa).

The protein belongs to the bacterial ribosomal protein bS18 family. In terms of assembly, part of the 30S ribosomal subunit. Forms a tight heterodimer with protein bS6.

Functionally, binds as a heterodimer with protein bS6 to the central domain of the 16S rRNA, where it helps stabilize the platform of the 30S subunit. This Methylobacterium radiotolerans (strain ATCC 27329 / DSM 1819 / JCM 2831 / NBRC 15690 / NCIMB 10815 / 0-1) protein is Small ribosomal subunit protein bS18.